We begin with the raw amino-acid sequence, 264 residues long: 1H-3-hydroxy-4-oxoquinoline 2,4-dioxygenase (264 aa).

Substrate-binding positions include 30–32 (WCQ), 94–95 (TS), and Trp153. The active-site Proton donor/acceptor is His244.

This sequence belongs to the AB hydrolase superfamily. The cofactor is None. Contrary to most other dioxygenases, this enzyme does not require a cofactor for catalysis..

The catalysed reaction is 3-hydroxy-1H-quinolin-4-one + O2 = N-formylanthranilate + CO + H(+). In terms of biological role, ring-cleaving dioxygenase involved in oxoquinoline degradation and utilization. The polypeptide is 1H-3-hydroxy-4-oxoquinoline 2,4-dioxygenase (qdo) (Pseudomonas putida (Arthrobacter siderocapsulatus)).